A 324-amino-acid polypeptide reads, in one-letter code: Appendage-associated protein (324 aa).

The N-terminal stretch at 1–32 (MGCPVSRGGSPGCGRRIAEELRLAEDARLRLA) is a signal peptide. A coiled-coil region spans residues 195 to 255 (IAQAKEIAQA…AADKLQALGK (61 aa)).

Its subcellular location is the secreted. Associates with actin filament appendages that are formed in the inclusion appendages of the parasitophorous vacuole during infection of the host erythrocyte. This is Appendage-associated protein (aaaP1) from Anaplasma marginale (strain Florida).